The primary structure comprises 244 residues: Lactate utilization protein A (244 aa).

This sequence belongs to the LutA/YkgE family.

Functionally, is involved in L-lactate degradation and allows cells to grow with lactate as the sole carbon source. The polypeptide is Lactate utilization protein A (Halalkalibacterium halodurans (strain ATCC BAA-125 / DSM 18197 / FERM 7344 / JCM 9153 / C-125) (Bacillus halodurans)).